We begin with the raw amino-acid sequence, 228 residues long: 2,3-bisphosphoglycerate-dependent phosphoglycerate mutase (228 aa).

Residues 8 to 15, 21 to 22, arginine 60, 87 to 90, lysine 98, 114 to 115, and 183 to 184 each bind substrate; these read RHGQSEWN, TG, ERHY, RR, and GN. Catalysis depends on histidine 9, which acts as the Tele-phosphohistidine intermediate. Catalysis depends on glutamate 87, which acts as the Proton donor/acceptor.

This sequence belongs to the phosphoglycerate mutase family. BPG-dependent PGAM subfamily.

It carries out the reaction (2R)-2-phosphoglycerate = (2R)-3-phosphoglycerate. It participates in carbohydrate degradation; glycolysis; pyruvate from D-glyceraldehyde 3-phosphate: step 3/5. Its function is as follows. Catalyzes the interconversion of 2-phosphoglycerate and 3-phosphoglycerate. This is 2,3-bisphosphoglycerate-dependent phosphoglycerate mutase from Staphylococcus haemolyticus (strain JCSC1435).